Reading from the N-terminus, the 73-residue chain is Signaling peptide TAXIMIN 2 (73 aa).

Residues 1–27 form the signal peptide; sequence MGDCRPLGFLIGLPFALVALVLALVGA.

In terms of tissue distribution, confined to the vasculature of various organs, including seedling roots, leaves, cotyledons, sepals and petals. Also accumulates in root hair cells.

The protein resides in the secreted. Its function is as follows. Signaling peptide involved in the regulation of lateral organs separation. The polypeptide is Signaling peptide TAXIMIN 2 (Arabidopsis thaliana (Mouse-ear cress)).